A 419-amino-acid polypeptide reads, in one-letter code: Transcription termination factor Rho (419 aa).

The 76-residue stretch at 48 to 123 (GFTCSGTLEI…VRLDSINGDH (76 aa)) folds into the Rho RNA-BD domain. Residues 169–174 (GKGQRA), 181–186 (KIGKTV), and Arg-212 each bind ATP.

It belongs to the Rho family. As to quaternary structure, homohexamer. The homohexamer assembles into an open ring structure.

In terms of biological role, facilitates transcription termination by a mechanism that involves Rho binding to the nascent RNA, activation of Rho's RNA-dependent ATPase activity, and release of the mRNA from the DNA template. This Neisseria gonorrhoeae protein is Transcription termination factor Rho.